Consider the following 519-residue polypeptide: (3S,6E)-nerolidol synthase 1 (519 aa).

Asp273, Asp277, Asp417, Ser421, and Glu425 together coordinate Mg(2+). Residues 273–277 (DDIFD) carry the DDXXD motif motif.

The protein belongs to the terpene synthase family. Tpsg subfamily. It depends on Mg(2+) as a cofactor. Mn(2+) serves as cofactor. Expressed in receptacle tissue. Not detected in leaves or green fruit.

Its subcellular location is the cytoplasm. It localises to the cytosol. It catalyses the reaction (2E,6E)-farnesyl diphosphate + H2O = (3S,6E)-nerolidol + diphosphate. It functions in the pathway secondary metabolite biosynthesis; terpenoid biosynthesis. Functionally, involved in monoterpene (C10) and sesquiterpene (C15) biosynthesis. Converts geranyl diphosphate (GPP) into S-linalool and farnesyl diphosphate (FPP) into (3S)-E-nerolidol. Exclusively present and highly expressed in the fruit of cultivated (octaploid) varieties. The chain is (3S,6E)-nerolidol synthase 1 from Fragaria ananassa (Strawberry).